We begin with the raw amino-acid sequence, 227 residues long: MAYPFQLGLQDATSPIMEELMNFHDHTLMIVFLISSLVLYIISLMLTTKLTHTSTMDAQEVETIWTILPAVILIMIALPSLRILYMMDEINNPVLTVKTMGHQWYWSYEYTDYEDLCFDSYMIPTNDLKPGELRLLEVDNRVVLPMELPIRMLISSEDVLHSWAVPSLGLKTDAIPGRLNQATVTSNRPGLFYGQCSEICGSNHSFMPIVLEMVPLKYFENWSASMI.

The Mitochondrial intermembrane portion of the chain corresponds to 1-22 (MAYPFQLGLQDATSPIMEELMN). The chain crosses the membrane as a helical span at residues 23–44 (FHDHTLMIVFLISSLVLYIISL). The Mitochondrial matrix segment spans residues 45-60 (MLTTKLTHTSTMDAQE). A helical membrane pass occupies residues 61–81 (VETIWTILPAVILIMIALPSL). The Mitochondrial intermembrane portion of the chain corresponds to 82-227 (RILYMMDEIN…YFENWSASMI (146 aa)). Residues His161, Cys196, Glu198, Cys200, His204, and Met207 each contribute to the Cu cation site. A Mg(2+)-binding site is contributed by Glu198. Tyr218 is subject to Phosphotyrosine.

This sequence belongs to the cytochrome c oxidase subunit 2 family. In terms of assembly, component of the cytochrome c oxidase (complex IV, CIV), a multisubunit enzyme composed of 14 subunits. The complex is composed of a catalytic core of 3 subunits MT-CO1, MT-CO2 and MT-CO3, encoded in the mitochondrial DNA, and 11 supernumerary subunits COX4I, COX5A, COX5B, COX6A, COX6B, COX6C, COX7A, COX7B, COX7C, COX8 and NDUFA4, which are encoded in the nuclear genome. The complex exists as a monomer or a dimer and forms supercomplexes (SCs) in the inner mitochondrial membrane with NADH-ubiquinone oxidoreductase (complex I, CI) and ubiquinol-cytochrome c oxidoreductase (cytochrome b-c1 complex, complex III, CIII), resulting in different assemblies (supercomplex SCI(1)III(2)IV(1) and megacomplex MCI(2)III(2)IV(2)). Found in a complex with TMEM177, COA6, COX18, COX20, SCO1 and SCO2. Interacts with TMEM177 in a COX20-dependent manner. Interacts with COX20. Interacts with COX16. Cu cation serves as cofactor.

It localises to the mitochondrion inner membrane. It catalyses the reaction 4 Fe(II)-[cytochrome c] + O2 + 8 H(+)(in) = 4 Fe(III)-[cytochrome c] + 2 H2O + 4 H(+)(out). Its function is as follows. Component of the cytochrome c oxidase, the last enzyme in the mitochondrial electron transport chain which drives oxidative phosphorylation. The respiratory chain contains 3 multisubunit complexes succinate dehydrogenase (complex II, CII), ubiquinol-cytochrome c oxidoreductase (cytochrome b-c1 complex, complex III, CIII) and cytochrome c oxidase (complex IV, CIV), that cooperate to transfer electrons derived from NADH and succinate to molecular oxygen, creating an electrochemical gradient over the inner membrane that drives transmembrane transport and the ATP synthase. Cytochrome c oxidase is the component of the respiratory chain that catalyzes the reduction of oxygen to water. Electrons originating from reduced cytochrome c in the intermembrane space (IMS) are transferred via the dinuclear copper A center (CU(A)) of subunit 2 and heme A of subunit 1 to the active site in subunit 1, a binuclear center (BNC) formed by heme A3 and copper B (CU(B)). The BNC reduces molecular oxygen to 2 water molecules using 4 electrons from cytochrome c in the IMS and 4 protons from the mitochondrial matrix. The polypeptide is Cytochrome c oxidase subunit 2 (Mtco2) (Mus musculus (Mouse)).